Consider the following 749-residue polypeptide: Patatin-like phospholipase domain-containing protein AN0408 (749 aa).

Residues 1 to 11 (MEKSAAGDNID) are compositionally biased toward basic and acidic residues. The disordered stretch occupies residues 1 to 21 (MEKSAAGDNIDKYSPSSIPDY). A helical transmembrane segment spans residues 92-112 (WPFLLFVLGWITFLSVGYALT). Residues 280–471 (LCLSGGATFA…RTDIPIKALN (192 aa)) enclose the PNPLA domain. The GXSXG signature appears at 311-315 (GTSGG). The active-site Nucleophile is serine 313. The active-site Proton acceptor is aspartate 458. The tract at residues 630-659 (SIQPFPFDNGAAGADQKSNDPREERLNRNF) is disordered. Positions 646–659 (KSNDPREERLNRNF) are enriched in basic and acidic residues.

Belongs to the PLPL family.

The protein resides in the membrane. Probable lipid hydrolase. The protein is Patatin-like phospholipase domain-containing protein AN0408 of Emericella nidulans (strain FGSC A4 / ATCC 38163 / CBS 112.46 / NRRL 194 / M139) (Aspergillus nidulans).